The chain runs to 181 residues: Acireductone dioxygenase (181 aa).

Fe(2+) is bound by residues His97, His99, Glu103, and His141. Ni(2+)-binding residues include His97, His99, Glu103, and His141.

The protein belongs to the acireductone dioxygenase (ARD) family. In terms of assembly, monomer. Requires Fe(2+) as cofactor. Ni(2+) is required as a cofactor.

It carries out the reaction 1,2-dihydroxy-5-(methylsulfanyl)pent-1-en-3-one + O2 = 3-(methylsulfanyl)propanoate + CO + formate + 2 H(+). The enzyme catalyses 1,2-dihydroxy-5-(methylsulfanyl)pent-1-en-3-one + O2 = 4-methylsulfanyl-2-oxobutanoate + formate + 2 H(+). It functions in the pathway amino-acid biosynthesis; L-methionine biosynthesis via salvage pathway; L-methionine from S-methyl-5-thio-alpha-D-ribose 1-phosphate: step 5/6. In terms of biological role, catalyzes 2 different reactions between oxygen and the acireductone 1,2-dihydroxy-3-keto-5-methylthiopentene (DHK-MTPene) depending upon the metal bound in the active site. Fe-containing acireductone dioxygenase (Fe-ARD) produces formate and 2-keto-4-methylthiobutyrate (KMTB), the alpha-ketoacid precursor of methionine in the methionine recycle pathway. Ni-containing acireductone dioxygenase (Ni-ARD) produces methylthiopropionate, carbon monoxide and formate, and does not lie on the methionine recycle pathway. This Pseudomonas syringae pv. tomato (strain ATCC BAA-871 / DC3000) protein is Acireductone dioxygenase.